The chain runs to 305 residues: Large ribosomal subunit protein uL10 (305 aa).

The protein belongs to the universal ribosomal protein uL10 family. P0 forms a pentameric complex by interaction with dimers of P1 and P2. In terms of processing, phosphorylated.

Its function is as follows. Ribosomal protein P0 is the functional equivalent of E.coli protein L10. The protein is Large ribosomal subunit protein uL10 (rplp0) of Dictyostelium discoideum (Social amoeba).